The following is a 570-amino-acid chain: Sulfite reductase [NADPH] hemoprotein beta-component (570 aa).

Residues Cys-434, Cys-440, Cys-479, and Cys-483 each coordinate [4Fe-4S] cluster. Siroheme is bound at residue Cys-483.

This sequence belongs to the nitrite and sulfite reductase 4Fe-4S domain family. As to quaternary structure, alpha(8)-beta(8). The alpha component is a flavoprotein, the beta component is a hemoprotein. Siroheme is required as a cofactor. Requires [4Fe-4S] cluster as cofactor.

The enzyme catalyses hydrogen sulfide + 3 NADP(+) + 3 H2O = sulfite + 3 NADPH + 4 H(+). The protein operates within sulfur metabolism; hydrogen sulfide biosynthesis; hydrogen sulfide from sulfite (NADPH route): step 1/1. In terms of biological role, component of the sulfite reductase complex that catalyzes the 6-electron reduction of sulfite to sulfide. This is one of several activities required for the biosynthesis of L-cysteine from sulfate. This is Sulfite reductase [NADPH] hemoprotein beta-component from Shigella flexneri serotype 5b (strain 8401).